A 214-amino-acid polypeptide reads, in one-letter code: Adenylate kinase (214 aa).

ATP is bound at residue 10 to 15; sequence GAGKGT. The interval 30 to 59 is NMP; sequence STGDIFRANIKNGTELGKKAKTYMDQGALV. Residues T31, R36, 57–59, 85–88, and Q92 contribute to the AMP site; these read ALV and GFPR. Residues 126–163 form an LID region; that stretch reads GRRACLNCGATYHIVFNPTKVEGKCDACGADTVLRDDD. R127 is an ATP binding site. Residues C130 and C133 each coordinate Zn(2+). 136–137 is an ATP binding site; the sequence is TY. Zn(2+)-binding residues include C150 and C153. AMP contacts are provided by R160 and R171. K199 contributes to the ATP binding site.

This sequence belongs to the adenylate kinase family. Monomer.

It is found in the cytoplasm. The enzyme catalyses AMP + ATP = 2 ADP. The protein operates within purine metabolism; AMP biosynthesis via salvage pathway; AMP from ADP: step 1/1. Functionally, catalyzes the reversible transfer of the terminal phosphate group between ATP and AMP. Plays an important role in cellular energy homeostasis and in adenine nucleotide metabolism. This is Adenylate kinase from Agathobacter rectalis (strain ATCC 33656 / DSM 3377 / JCM 17463 / KCTC 5835 / VPI 0990) (Eubacterium rectale).